Consider the following 197-residue polypeptide: dITP/XTP pyrophosphatase (197 aa).

A substrate-binding site is contributed by 8–13; the sequence is TGNPGK. 2 residues coordinate Mg(2+): glutamate 40 and aspartate 69. The active-site Proton acceptor is aspartate 69. Substrate contacts are provided by residues serine 70, 154–157, lysine 177, and 182–183; these read FGYD and HR.

This sequence belongs to the HAM1 NTPase family. In terms of assembly, homodimer. The cofactor is Mg(2+).

The catalysed reaction is XTP + H2O = XMP + diphosphate + H(+). The enzyme catalyses dITP + H2O = dIMP + diphosphate + H(+). It carries out the reaction ITP + H2O = IMP + diphosphate + H(+). Its function is as follows. Pyrophosphatase that catalyzes the hydrolysis of nucleoside triphosphates to their monophosphate derivatives, with a high preference for the non-canonical purine nucleotides XTP (xanthosine triphosphate), dITP (deoxyinosine triphosphate) and ITP. Seems to function as a house-cleaning enzyme that removes non-canonical purine nucleotides from the nucleotide pool, thus preventing their incorporation into DNA/RNA and avoiding chromosomal lesions. This chain is dITP/XTP pyrophosphatase, found in Pectobacterium atrosepticum (strain SCRI 1043 / ATCC BAA-672) (Erwinia carotovora subsp. atroseptica).